Reading from the N-terminus, the 157-residue chain is SsrA-binding protein (157 aa).

The span at 136–151 (KRETEKKRDWSREKGR) shows a compositional bias: basic and acidic residues. The disordered stretch occupies residues 136-157 (KRETEKKRDWSREKGRLLRARG).

This sequence belongs to the SmpB family.

Its subcellular location is the cytoplasm. Functionally, required for rescue of stalled ribosomes mediated by trans-translation. Binds to transfer-messenger RNA (tmRNA), required for stable association of tmRNA with ribosomes. tmRNA and SmpB together mimic tRNA shape, replacing the anticodon stem-loop with SmpB. tmRNA is encoded by the ssrA gene; the 2 termini fold to resemble tRNA(Ala) and it encodes a 'tag peptide', a short internal open reading frame. During trans-translation Ala-aminoacylated tmRNA acts like a tRNA, entering the A-site of stalled ribosomes, displacing the stalled mRNA. The ribosome then switches to translate the ORF on the tmRNA; the nascent peptide is terminated with the 'tag peptide' encoded by the tmRNA and targeted for degradation. The ribosome is freed to recommence translation, which seems to be the essential function of trans-translation. The polypeptide is SsrA-binding protein (Rhodopseudomonas palustris (strain HaA2)).